We begin with the raw amino-acid sequence, 132 residues long: Nickel-responsive regulator (132 aa).

Residues histidine 76, histidine 87, histidine 89, and cysteine 95 each coordinate Ni(2+).

It belongs to the transcriptional regulatory CopG/NikR family. Homotetramer. Ni(2+) is required as a cofactor.

In terms of biological role, transcriptional repressor of the nikABCDE operon. Is active in the presence of excessive concentrations of intracellular nickel. The protein is Nickel-responsive regulator of Klebsiella pneumoniae subsp. pneumoniae (strain ATCC 700721 / MGH 78578).